Here is a 359-residue protein sequence, read N- to C-terminus: Peptide chain release factor 1 (359 aa).

Glutamine 235 carries the N5-methylglutamine modification.

This sequence belongs to the prokaryotic/mitochondrial release factor family. Post-translationally, methylated by PrmC. Methylation increases the termination efficiency of RF1.

Its subcellular location is the cytoplasm. Peptide chain release factor 1 directs the termination of translation in response to the peptide chain termination codons UAG and UAA. This Polynucleobacter necessarius subsp. necessarius (strain STIR1) protein is Peptide chain release factor 1.